A 1323-amino-acid chain; its full sequence is Lysine-specific demethylase 3A (1323 aa).

3 disordered regions span residues 255–287, 307–337, and 385–416; these read TRTG…PSMC, ATPS…PQGC, and SEPK…GLPK. At Ser-264 the chain carries Phosphoserine. Polar residues-rich tracts occupy residues 266 to 283 and 307 to 327; these read ENNG…SEAS and ATPS…NSPP. Ser-325 is modified (phosphoserine). Phosphoserine is present on Ser-446. 2 disordered regions span residues 468 to 487 and 495 to 517; these read AEKK…LKET and SCCT…LTDP. 2 stretches are compositionally biased toward polar residues: residues 477–486 and 495–507; these read LGSQSQNLKE and SCCT…TQTP. The segment at 662–687 adopts a C6-type zinc-finger fold; sequence CDVCDTTIFNLHWVCPRCGFGVCVDC. An LXXLL motif motif is present at residues 885 to 889; it reads LRNLL. Residue Lys-895 is modified to N6-acetyllysine. A JmjC domain is found at 1060–1283; sequence MPSRFDDLMA…HCFWLTQEFR (224 aa). The Fe cation site is built by His-1122, Asp-1124, and His-1251.

Belongs to the JHDM2 histone demethylase family. As to quaternary structure, interacts with VRK1. Fe(2+) serves as cofactor. In terms of tissue distribution, highly expressed in testis (at protein level). Also expressed at high levels in tissues responsive to sympathetic nerve activity such as brown adipose tissue and skeletal muscle.

The protein resides in the cytoplasm. The protein localises to the nucleus. It catalyses the reaction N(6),N(6)-dimethyl-L-lysyl(9)-[histone H3] + 2 2-oxoglutarate + 2 O2 = L-lysyl(9)-[histone H3] + 2 formaldehyde + 2 succinate + 2 CO2. Functionally, histone demethylase that specifically demethylates 'Lys-9' of histone H3, thereby playing a central role in histone code. Preferentially demethylates mono- and dimethylated H3 'Lys-9' residue, with a preference for dimethylated residue, while it has weak or no activity on trimethylated H3 'Lys-9'. Demethylation of Lys residue generates formaldehyde and succinate. Involved in hormone-dependent transcriptional activation, by participating in recruitment to androgen-receptor target genes, resulting in H3 'Lys-9' demethylation and transcriptional activation. Involved in spermatogenesis by regulating expression of target genes such as PRM1 and TNP1 which are required for packaging and condensation of sperm chromatin. Involved in obesity resistance through regulation of metabolic genes such as PPARA and UCP1. This is Lysine-specific demethylase 3A (Kdm3a) from Mus musculus (Mouse).